Consider the following 251-residue polypeptide: Small ribosomal subunit protein uS2 (251 aa).

The protein belongs to the universal ribosomal protein uS2 family.

The chain is Small ribosomal subunit protein uS2 from Deinococcus deserti (strain DSM 17065 / CIP 109153 / LMG 22923 / VCD115).